A 340-amino-acid polypeptide reads, in one-letter code: Guanine nucleotide-binding protein subunit beta-4 (340 aa).

An N-acetylserine modification is found at Ser-2. The residue at position 2 (Ser-2) is a Phosphoserine. 5 WD repeats span residues 53 to 92 (GHLA…KMHA), 95 to 134 (LRSS…GNVR), 141 to 179 (GHTG…QTTT), 182 to 221 (GHSG…CRQS), and 224 to 263 (GHIS…ELLL). Position 266 is a phosphohistidine (His-266). WD repeat units follow at residues 268 to 307 (NIIC…RAGV) and 310 to 339 (GHDN…LRIW).

The protein belongs to the WD repeat G protein beta family. In terms of assembly, g proteins are composed of 3 units, alpha, beta and gamma. As to expression, widely expressed in the brain. Highest levels found in the hippocampus and layers v and vi of the neocortex.

Guanine nucleotide-binding proteins (G proteins) are involved as a modulator or transducer in various transmembrane signaling systems. The beta and gamma chains are required for the GTPase activity, for replacement of GDP by GTP, and for G protein-effector interaction. The sequence is that of Guanine nucleotide-binding protein subunit beta-4 (Gnb4) from Rattus norvegicus (Rat).